A 138-amino-acid chain; its full sequence is MNIIDRFEQENISKRTANKKIPDFEAGDTVKVTVKIVDRSIEKDGKEKLTERFQAYEGVVIAKRNRGITSSFLVRKISHGEGVERRFMTYSPIVHSIDVVKYGVVRRAKLYYLRNRSGKSARIKERHIPIAKTKAAKA.

This sequence belongs to the bacterial ribosomal protein bL19 family.

This protein is located at the 30S-50S ribosomal subunit interface and may play a role in the structure and function of the aminoacyl-tRNA binding site. The polypeptide is Large ribosomal subunit protein bL19 (Rickettsia rickettsii (strain Iowa)).